The sequence spans 203 residues: Imidazoleglycerol-phosphate dehydratase (203 aa).

The protein belongs to the imidazoleglycerol-phosphate dehydratase family.

The protein resides in the cytoplasm. The catalysed reaction is D-erythro-1-(imidazol-4-yl)glycerol 3-phosphate = 3-(imidazol-4-yl)-2-oxopropyl phosphate + H2O. It functions in the pathway amino-acid biosynthesis; L-histidine biosynthesis; L-histidine from 5-phospho-alpha-D-ribose 1-diphosphate: step 6/9. The chain is Imidazoleglycerol-phosphate dehydratase from Synechococcus sp. (strain RCC307).